A 238-amino-acid polypeptide reads, in one-letter code: Orotidine 5'-phosphate decarboxylase (238 aa).

Substrate is bound by residues Asp-10, Lys-32, 59-68 (DLKLHDIPNT), Thr-122, Arg-184, Gln-193, Gly-213, and Arg-214. The Proton donor role is filled by Lys-61.

The protein belongs to the OMP decarboxylase family. Type 1 subfamily. In terms of assembly, homodimer.

It carries out the reaction orotidine 5'-phosphate + H(+) = UMP + CO2. It participates in pyrimidine metabolism; UMP biosynthesis via de novo pathway; UMP from orotate: step 2/2. Its function is as follows. Catalyzes the decarboxylation of orotidine 5'-monophosphate (OMP) to uridine 5'-monophosphate (UMP). The polypeptide is Orotidine 5'-phosphate decarboxylase (Bacillus thuringiensis subsp. konkukian (strain 97-27)).